The chain runs to 308 residues: HTH-type transcriptional activator AllS (308 aa).

The HTH lysR-type domain maps to 2–59; sequence FDPETLRTFIAVAETGSFSKAAERLCKTTATISYRIKLLEENTGVALFFRTTRSVTLT. The segment at residues 19–38 is a DNA-binding region (H-T-H motif); it reads FSKAAERLCKTTATISYRIK.

The protein belongs to the LysR transcriptional regulatory family.

In terms of biological role, positive regulator essential for the expression of allD operon. Binds to the allD promoter. This is HTH-type transcriptional activator AllS (allS) from Escherichia coli O6:K15:H31 (strain 536 / UPEC).